A 202-amino-acid polypeptide reads, in one-letter code: Imidazoleglycerol-phosphate dehydratase (202 aa).

Belongs to the imidazoleglycerol-phosphate dehydratase family.

It is found in the cytoplasm. The enzyme catalyses D-erythro-1-(imidazol-4-yl)glycerol 3-phosphate = 3-(imidazol-4-yl)-2-oxopropyl phosphate + H2O. It functions in the pathway amino-acid biosynthesis; L-histidine biosynthesis; L-histidine from 5-phospho-alpha-D-ribose 1-diphosphate: step 6/9. The polypeptide is Imidazoleglycerol-phosphate dehydratase (Mycolicibacterium gilvum (strain PYR-GCK) (Mycobacterium gilvum (strain PYR-GCK))).